The primary structure comprises 127 residues: Large ribosomal subunit protein bL12 (127 aa).

This sequence belongs to the bacterial ribosomal protein bL12 family. Homodimer. Part of the ribosomal stalk of the 50S ribosomal subunit. Forms a multimeric L10(L12)X complex, where L10 forms an elongated spine to which 2 to 4 L12 dimers bind in a sequential fashion. Binds GTP-bound translation factors.

In terms of biological role, forms part of the ribosomal stalk which helps the ribosome interact with GTP-bound translation factors. Is thus essential for accurate translation. In Sinorhizobium fredii (strain NBRC 101917 / NGR234), this protein is Large ribosomal subunit protein bL12.